The primary structure comprises 356 residues: Protein RecA (356 aa).

Position 79-86 (79-86 (GPESSGKT)) interacts with ATP.

It belongs to the RecA family.

The protein localises to the cytoplasm. In terms of biological role, can catalyze the hydrolysis of ATP in the presence of single-stranded DNA, the ATP-dependent uptake of single-stranded DNA by duplex DNA, and the ATP-dependent hybridization of homologous single-stranded DNAs. It interacts with LexA causing its activation and leading to its autocatalytic cleavage. The chain is Protein RecA from Borrelia hermsii (strain HS1 / DAH).